The chain runs to 227 residues: uncharacterized protein (227 aa).

A run of 2 helical transmembrane segments spans residues 113–133 and 141–161; these read IMLI…FIVF and FGIC…NGLI.

The protein resides in the membrane. This is an uncharacterized protein from Dictyostelium discoideum (Social amoeba).